The chain runs to 387 residues: 3-ketoacyl-CoA thiolase (387 aa).

C91 functions as the Acyl-thioester intermediate in the catalytic mechanism. Residues H343 and C373 each act as proton acceptor in the active site.

The protein belongs to the thiolase-like superfamily. Thiolase family. In terms of assembly, heterotetramer of two alpha chains (FadB) and two beta chains (FadA).

It is found in the cytoplasm. The catalysed reaction is an acyl-CoA + acetyl-CoA = a 3-oxoacyl-CoA + CoA. It participates in lipid metabolism; fatty acid beta-oxidation. Functionally, catalyzes the final step of fatty acid oxidation in which acetyl-CoA is released and the CoA ester of a fatty acid two carbons shorter is formed. Involved in the aerobic and anaerobic degradation of long-chain fatty acids. This chain is 3-ketoacyl-CoA thiolase, found in Escherichia coli O6:H1 (strain CFT073 / ATCC 700928 / UPEC).